A 401-amino-acid chain; its full sequence is LL-diaminopimelate aminotransferase (401 aa).

Residues Y15 and G42 each coordinate substrate. Residues Y72, 108-109, Y132, N176, Y207, and 235-237 each bind pyridoxal 5'-phosphate; these read AK and SFS. The substrate site is built by K109, Y132, and N176. K238 bears the N6-(pyridoxal phosphate)lysine mark. Pyridoxal 5'-phosphate is bound by residues R246 and N281. N281 and R377 together coordinate substrate.

This sequence belongs to the class-I pyridoxal-phosphate-dependent aminotransferase family. LL-diaminopimelate aminotransferase subfamily. As to quaternary structure, homodimer. Requires pyridoxal 5'-phosphate as cofactor.

It carries out the reaction (2S,6S)-2,6-diaminopimelate + 2-oxoglutarate = (S)-2,3,4,5-tetrahydrodipicolinate + L-glutamate + H2O + H(+). The protein operates within amino-acid biosynthesis; L-lysine biosynthesis via DAP pathway; LL-2,6-diaminopimelate from (S)-tetrahydrodipicolinate (aminotransferase route): step 1/1. Involved in the synthesis of meso-diaminopimelate (m-DAP or DL-DAP), required for both lysine and peptidoglycan biosynthesis. Catalyzes the direct conversion of tetrahydrodipicolinate to LL-diaminopimelate. The polypeptide is LL-diaminopimelate aminotransferase (Azobacteroides pseudotrichonymphae genomovar. CFP2).